We begin with the raw amino-acid sequence, 614 residues long: 1-deoxy-D-xylulose-5-phosphate synthase (614 aa).

Residues histidine 76 and 117 to 119 (GHS) each bind thiamine diphosphate. Aspartate 148 is a binding site for Mg(2+). Residues 149 to 150 (GA), asparagine 177, tyrosine 285, and glutamate 366 contribute to the thiamine diphosphate site. Asparagine 177 contacts Mg(2+).

This sequence belongs to the transketolase family. DXPS subfamily. Homodimer. Requires Mg(2+) as cofactor. Thiamine diphosphate serves as cofactor.

It carries out the reaction D-glyceraldehyde 3-phosphate + pyruvate + H(+) = 1-deoxy-D-xylulose 5-phosphate + CO2. It functions in the pathway metabolic intermediate biosynthesis; 1-deoxy-D-xylulose 5-phosphate biosynthesis; 1-deoxy-D-xylulose 5-phosphate from D-glyceraldehyde 3-phosphate and pyruvate: step 1/1. Catalyzes the acyloin condensation reaction between C atoms 2 and 3 of pyruvate and glyceraldehyde 3-phosphate to yield 1-deoxy-D-xylulose-5-phosphate (DXP). This Pasteurella multocida (strain Pm70) protein is 1-deoxy-D-xylulose-5-phosphate synthase.